Here is a 167-residue protein sequence, read N- to C-terminus: MAWSASVRGLGQRVLACSRELPGAWRTLHTSAVCAKNRAARVRVAKGNKPVSYEEAHAPHYIAHRKGWLSLHTGNLDGEDHAAERTLEDVFLRKFMMGTFPGCLADQIVLKRRANQVDICALVLRQLPAHKFYFLVGYSETLLSHFYKCPVRLHLQTVPSKVVYKYI.

The transit peptide at 1 to 35 (MAWSASVRGLGQRVLACSRELPGAWRTLHTSAVCA) directs the protein to the mitochondrion.

The protein belongs to the universal ribosomal protein uS3 family. In terms of assembly, component of the mitochondrial ribosome small subunit (28S) which comprises a 12S rRNA and about 30 distinct proteins.

The protein resides in the mitochondrion. The chain is Small ribosomal subunit protein uS3m (Mrps24) from Mus musculus (Mouse).